The following is a 329-amino-acid chain: Transcription factor RAX1 (329 aa).

HTH myb-type domains are found at residues 9–62 and 63–117; these read KTKV…LNYL and RPNI…RKKL. 2 consecutive DNA-binding regions (H-T-H motif) follow at residues 38-62 and 90-113; these read WISF…LNYL and WSII…NTKL. 2 stretches are compositionally biased toward low complexity: residues 122–131 and 144–154; these read SDSSSSAMAS and PTSPTTIPSSS. Residues 122-162 are disordered; it reads SDSSSSAMASPYLNPISQDVKRPTSPTTIPSSSYNPYAENP.

As to expression, mostly expressed in roots. Also present in shoot tips and flower buds.

Its subcellular location is the nucleus. Transcription activator of genes involved in the regulation of meristematic competence, such as CUC2. Positively regulates axillary meristems (AMs) formation and development, especially at early phases of vegetative growth, probably by specifying a stem cell niche for AM formation. Modulates the negative regulation mediated by gibberellic acid on the timing of developmental phase transitions. The chain is Transcription factor RAX1 (RAX1) from Arabidopsis thaliana (Mouse-ear cress).